Here is a 44-residue protein sequence, read N- to C-terminus: Cuticle protein CP466 (44 aa).

2 tandem repeats follow at residues 3-20 and 27-44.

Calcified shell.

This chain is Cuticle protein CP466, found in Cancer pagurus (Rock crab).